The following is a 395-amino-acid chain: Phosphoglycerate kinase (395 aa).

Substrate is bound by residues 21 to 23 (DFN), R36, 59 to 62 (HLGR), R120, and R153. Residues K203, E325, and 351–354 (GGDS) contribute to the ATP site.

It belongs to the phosphoglycerate kinase family. In terms of assembly, monomer.

It is found in the cytoplasm. It catalyses the reaction (2R)-3-phosphoglycerate + ATP = (2R)-3-phospho-glyceroyl phosphate + ADP. It participates in carbohydrate degradation; glycolysis; pyruvate from D-glyceraldehyde 3-phosphate: step 2/5. The polypeptide is Phosphoglycerate kinase (Roseiflexus castenholzii (strain DSM 13941 / HLO8)).